Consider the following 943-residue polypeptide: Translation initiation factor IF-2 (943 aa).

Positions 35–359 are disordered; the sequence is MSSIDQDQEA…MPQRKERPLP (325 aa). Residues 57-76 are compositionally biased toward low complexity; that stretch reads KAPSSQAAKTPAKAAKTSSA. Basic and acidic residues-rich tracts occupy residues 92–103 and 110–124; these read SNDHADAAEHSQ and AKQE…KTSD. A compositionally biased stretch (polar residues) spans 130–141; sequence SKSTILRPRSTQ. Over residues 142-190 the composition is skewed to low complexity; the sequence is TAHTNTNHNRGGNTASANNTANGRNSNRSNNNNNNRSANNANRSGNNNR. Basic and acidic residues-rich tracts occupy residues 191–205, 239–250, and 259–271; these read SNER…RFDN, ASERQQPKRQEA, and KRSE…RPRT. 2 stretches are compositionally biased toward low complexity: residues 289 to 299 and 315 to 330; these read PAAAAPKPASA and NFGR…GFNR. Residues 331–342 show a composition bias toward basic residues; the sequence is NNRRNKKNKRRQ. Basic and acidic residues predominate over residues 346-358; it reads PKKEMPQRKERPL. The tr-type G domain occupies 444–613; sequence PRPPVVTIMG…LLEADVLELK (170 aa). A G1 region spans residues 453–460; that stretch reads GHVDHGKT. 453-460 lines the GTP pocket; that stretch reads GHVDHGKT. The interval 478-482 is G2; that stretch reads GITQH. The interval 499–502 is G3; sequence DTPG. GTP contacts are provided by residues 499–503 and 553–556; these read DTPGH and NKID. The interval 553–556 is G4; the sequence is NKID. Positions 589 to 591 are G5; the sequence is SAK.

It belongs to the TRAFAC class translation factor GTPase superfamily. Classic translation factor GTPase family. IF-2 subfamily.

The protein localises to the cytoplasm. One of the essential components for the initiation of protein synthesis. Protects formylmethionyl-tRNA from spontaneous hydrolysis and promotes its binding to the 30S ribosomal subunits. Also involved in the hydrolysis of GTP during the formation of the 70S ribosomal complex. The sequence is that of Translation initiation factor IF-2 from Lacticaseibacillus paracasei (strain ATCC 334 / BCRC 17002 / CCUG 31169 / CIP 107868 / KCTC 3260 / NRRL B-441) (Lactobacillus paracasei).